A 219-amino-acid polypeptide reads, in one-letter code: Adenylate kinase (219 aa).

10-15 serves as a coordination point for ATP; it reads GAGKGT. An NMP region spans residues 30 to 59; sequence STGDMLRAAVKAGTPLGQQAKKVMDAGELV. Residues T31, R36, 57–59, 85–88, and Q92 contribute to the AMP site; these read ELV and GFPR. The tract at residues 122-159 is LID; that stretch reads GRRVHPGSGRVYHVEHNPPKEEGKDDVTGEPLVQRDDD. ATP contacts are provided by residues R123 and 132–133; that span reads VY. The tract at residues 129–152 is disordered; the sequence is SGRVYHVEHNPPKEEGKDDVTGEP. Positions 133–152 are enriched in basic and acidic residues; sequence YHVEHNPPKEEGKDDVTGEP. Residues R156 and R167 each coordinate AMP. Residue G203 participates in ATP binding.

Belongs to the adenylate kinase family. Monomer.

It localises to the cytoplasm. The catalysed reaction is AMP + ATP = 2 ADP. The protein operates within purine metabolism; AMP biosynthesis via salvage pathway; AMP from ADP: step 1/1. Functionally, catalyzes the reversible transfer of the terminal phosphate group between ATP and AMP. Plays an important role in cellular energy homeostasis and in adenine nucleotide metabolism. This is Adenylate kinase from Alkalilimnicola ehrlichii (strain ATCC BAA-1101 / DSM 17681 / MLHE-1).